The chain runs to 100 residues: Urease subunit gamma (100 aa).

The protein belongs to the urease gamma subunit family. Heterotrimer of UreA (gamma), UreB (beta) and UreC (alpha) subunits. Three heterotrimers associate to form the active enzyme.

The protein localises to the cytoplasm. The catalysed reaction is urea + 2 H2O + H(+) = hydrogencarbonate + 2 NH4(+). Its pathway is nitrogen metabolism; urea degradation; CO(2) and NH(3) from urea (urease route): step 1/1. The sequence is that of Urease subunit gamma from Cereibacter sphaeroides (strain ATCC 17029 / ATH 2.4.9) (Rhodobacter sphaeroides).